The following is a 650-amino-acid chain: Chaperone protein DnaK (650 aa).

Thr-200 is modified (phosphothreonine; by autocatalysis). The segment covering 612–632 has biased composition (low complexity); it reads GEGATAGAAAGAGAAGGQQAQ. Residues 612–650 form a disordered region; that stretch reads GEGATAGAAAGAGAAGGQQAQPQDDNVVDAEFKEVNDKK. Residues 641 to 650 are compositionally biased toward basic and acidic residues; sequence AEFKEVNDKK.

This sequence belongs to the heat shock protein 70 family.

Functionally, acts as a chaperone. This chain is Chaperone protein DnaK, found in Cupriavidus necator (strain ATCC 17699 / DSM 428 / KCTC 22496 / NCIMB 10442 / H16 / Stanier 337) (Ralstonia eutropha).